We begin with the raw amino-acid sequence, 286 residues long: 4-diphosphocytidyl-2-C-methyl-D-erythritol kinase (286 aa).

K11 is a catalytic residue. ATP is bound at residue P93–S103. D135 is a catalytic residue.

It belongs to the GHMP kinase family. IspE subfamily.

It catalyses the reaction 4-CDP-2-C-methyl-D-erythritol + ATP = 4-CDP-2-C-methyl-D-erythritol 2-phosphate + ADP + H(+). Its pathway is isoprenoid biosynthesis; isopentenyl diphosphate biosynthesis via DXP pathway; isopentenyl diphosphate from 1-deoxy-D-xylulose 5-phosphate: step 3/6. In terms of biological role, catalyzes the phosphorylation of the position 2 hydroxy group of 4-diphosphocytidyl-2C-methyl-D-erythritol. The protein is 4-diphosphocytidyl-2-C-methyl-D-erythritol kinase of Chlorobium phaeobacteroides (strain BS1).